The sequence spans 499 residues: Protein phosphatase PP2A 55 kDa regulatory subunit (499 aa).

The interval 1 to 30 is disordered; sequence MGRWGRQSPVLEPPDPQMQTTPPPPTLPPR. Residues 11–28 are compositionally biased toward pro residues; sequence LEPPDPQMQTTPPPPTLP. WD repeat units follow at residues 79-118, 144-185, 228-266, 277-317, 336-374, 391-432, and 467-498; these read TDADIISCVEFNHDGELLATGDKGGRVVIFQRDPASKAAN, EIEE…KSFG, AHTYHINSISVNSDQETFLSADDLRINLWHLEVVNQSYN, ELTE…LCDR, EIISSISDVKLSNSGRYMISRDYLSIKVWDLHMETKPIE, ENDC…DVTL, and DFNKKILHTAWHPEENIIAVAATNNLFIFQDK.

It belongs to the phosphatase 2A regulatory subunit B family. As to quaternary structure, PP2A exists in several trimeric forms, all of which consist of a core composed of a catalytic subunit associated with a 65 kDa regulatory subunit (PR65) (subunit A). The core complex associates with a third, variable subunit (subunit B), which confers distinct properties to the holoenzyme.

In terms of biological role, could perform a substrate recognition function or could be responsible for targeting the enzyme complex to the appropriate subcellular compartment. This chain is Protein phosphatase PP2A 55 kDa regulatory subunit (tws), found in Drosophila melanogaster (Fruit fly).